The sequence spans 148 residues: Transcriptional regulator MraZ (148 aa).

2 consecutive SpoVT-AbrB domains span residues 5–51 (VATV…PLPE) and 80–123 (AHDI…NEAR).

This sequence belongs to the MraZ family. Forms oligomers.

The protein localises to the cytoplasm. Its subcellular location is the nucleoid. The chain is Transcriptional regulator MraZ from Thiobacillus denitrificans (strain ATCC 25259 / T1).